Here is a 246-residue protein sequence, read N- to C-terminus: Uridylate kinase (246 aa).

Residue 13 to 16 coordinates ATP; it reads KLSG. Glycine 54 contacts UMP. The ATP site is built by glycine 55 and arginine 59. UMP-binding positions include aspartate 74 and 135-142; that span reads AGMPYFST. Residues asparagine 163, tyrosine 169, and aspartate 172 each coordinate ATP.

This sequence belongs to the UMP kinase family. In terms of assembly, homohexamer.

The protein resides in the cytoplasm. The catalysed reaction is UMP + ATP = UDP + ADP. It functions in the pathway pyrimidine metabolism; CTP biosynthesis via de novo pathway; UDP from UMP (UMPK route): step 1/1. Inhibited by UTP. In terms of biological role, catalyzes the reversible phosphorylation of UMP to UDP. This Bifidobacterium longum (strain NCC 2705) protein is Uridylate kinase.